The primary structure comprises 357 residues: NADH-quinone oxidoreductase subunit H (357 aa).

8 consecutive transmembrane segments (helical) span residues 20–40, 92–112, 127–147, 165–185, 203–223, 259–279, 294–314, and 329–349; these read WLLV…MGCV, ALFV…WAVI, LLFV…AGWA, ISYE…SGSL, GLTF…IYII, FFLA…LMFL, IPGW…FIWF, and LGWK…AIWM.

Belongs to the complex I subunit 1 family. In terms of assembly, NDH-1 is composed of 14 different subunits. Subunits NuoA, H, J, K, L, M, N constitute the membrane sector of the complex.

The protein localises to the cell inner membrane. It catalyses the reaction a quinone + NADH + 5 H(+)(in) = a quinol + NAD(+) + 4 H(+)(out). NDH-1 shuttles electrons from NADH, via FMN and iron-sulfur (Fe-S) centers, to quinones in the respiratory chain. The immediate electron acceptor for the enzyme in this species is believed to be ubiquinone. Couples the redox reaction to proton translocation (for every two electrons transferred, four hydrogen ions are translocated across the cytoplasmic membrane), and thus conserves the redox energy in a proton gradient. This subunit may bind ubiquinone. The sequence is that of NADH-quinone oxidoreductase subunit H from Herminiimonas arsenicoxydans.